Here is a 450-residue protein sequence, read N- to C-terminus: Tubulin alpha-5 chain (450 aa).

Positions 11, 71, 144, 145, 179, 206, and 228 each coordinate GTP. Glu-71 is a binding site for Mg(2+). Residue Glu-254 is part of the active site.

It belongs to the tubulin family. As to quaternary structure, dimer of alpha and beta chains. A typical microtubule is a hollow water-filled tube with an outer diameter of 25 nm and an inner diameter of 15 nM. Alpha-beta heterodimers associate head-to-tail to form protofilaments running lengthwise along the microtubule wall with the beta-tubulin subunit facing the microtubule plus end conferring a structural polarity. Microtubules usually have 13 protofilaments but different protofilament numbers can be found in some organisms and specialized cells. Mg(2+) serves as cofactor. Undergoes a tyrosination/detyrosination cycle, the cyclic removal and re-addition of a C-terminal tyrosine residue by the enzymes tubulin tyrosine carboxypeptidase (TTCP) and tubulin tyrosine ligase (TTL), respectively.

Its subcellular location is the cytoplasm. It localises to the cytoskeleton. It carries out the reaction GTP + H2O = GDP + phosphate + H(+). In terms of biological role, tubulin is the major constituent of microtubules, a cylinder consisting of laterally associated linear protofilaments composed of alpha- and beta-tubulin heterodimers. Microtubules grow by the addition of GTP-tubulin dimers to the microtubule end, where a stabilizing cap forms. Below the cap, tubulin dimers are in GDP-bound state, owing to GTPase activity of alpha-tubulin. The sequence is that of Tubulin alpha-5 chain (TUBA5) from Zea mays (Maize).